Consider the following 258-residue polypeptide: Mediator of RNA polymerase II transcription subunit 18 (258 aa).

Belongs to the Mediator complex subunit 18 family. As to quaternary structure, component of the Mediator complex.

It localises to the nucleus. Functionally, component of the Mediator complex, a coactivator involved in the regulated transcription of nearly all RNA polymerase II-dependent genes. Mediator functions as a bridge to convey information from gene-specific regulatory proteins to the basal RNA polymerase II transcription machinery. Mediator is recruited to promoters by direct interactions with regulatory proteins and serves as a scaffold for the assembly of a functional preinitiation complex with RNA polymerase II and the general transcription factors. In Eremothecium gossypii (strain ATCC 10895 / CBS 109.51 / FGSC 9923 / NRRL Y-1056) (Yeast), this protein is Mediator of RNA polymerase II transcription subunit 18 (SRB5).